Here is a 110-residue protein sequence, read N- to C-terminus: UPF0060 membrane protein Pcryo_1341 (110 aa).

Helical transmembrane passes span 7-27 (VGLF…PYLW), 33-53 (SIWL…LLTL), 63-83 (AAYG…VDGI), and 87-107 (TWDI…MFAP).

This sequence belongs to the UPF0060 family.

The protein resides in the cell inner membrane. The chain is UPF0060 membrane protein Pcryo_1341 from Psychrobacter cryohalolentis (strain ATCC BAA-1226 / DSM 17306 / VKM B-2378 / K5).